A 79-amino-acid polypeptide reads, in one-letter code: MNKKEFFTGAVKQVFIIPVKIYQYSISPLLPGACRYTPTCSEYCVQAIEKYGPLKGIWLGTKRICSCNPWGGSGYDPVP.

Belongs to the UPF0161 family.

The protein resides in the cell inner membrane. In terms of biological role, could be involved in insertion of integral membrane proteins into the membrane. The sequence is that of Putative membrane protein insertion efficiency factor from Cytophaga hutchinsonii (strain ATCC 33406 / DSM 1761 / CIP 103989 / NBRC 15051 / NCIMB 9469 / D465).